The chain runs to 527 residues: Probable pectinesterase/pectinesterase inhibitor 32 (527 aa).

Positions 1–24 (MAKFRQMGSSIFFLFLIIISLCSA) are cleaved as a signal peptide. Residues 25 to 165 (HKEAFSSTDL…GTTVRNLLTM (141 aa)) are pectinesterase inhibitor 32. N-linked (GlcNAc...) asparagine glycosylation is found at Asn-110, Asn-209, Asn-224, and Asn-280. The tract at residues 214–511 (DAVVAADGTG…FTVSQLIQGN (298 aa)) is pectinesterase 32. 2 residues coordinate substrate: Thr-289 and Gln-319. Asp-342 acts as the Proton donor; for pectinesterase activity in catalysis. Cysteines 356 and 376 form a disulfide. Asp-363 functions as the Nucleophile; for pectinesterase activity in the catalytic mechanism. The N-linked (GlcNAc...) asparagine glycan is linked to Asn-423. Substrate-binding residues include Arg-431 and Trp-433. N-linked (GlcNAc...) asparagine glycans are attached at residues Asn-494 and Asn-501.

The protein in the N-terminal section; belongs to the PMEI family. This sequence in the C-terminal section; belongs to the pectinesterase family. As to expression, expressed in siliques.

It is found in the secreted. The protein localises to the cell wall. It catalyses the reaction [(1-&gt;4)-alpha-D-galacturonosyl methyl ester](n) + n H2O = [(1-&gt;4)-alpha-D-galacturonosyl](n) + n methanol + n H(+). The protein operates within glycan metabolism; pectin degradation; 2-dehydro-3-deoxy-D-gluconate from pectin: step 1/5. Its function is as follows. Acts in the modification of cell walls via demethylesterification of cell wall pectin. In Arabidopsis thaliana (Mouse-ear cress), this protein is Probable pectinesterase/pectinesterase inhibitor 32 (PME32).